The chain runs to 279 residues: Pantothenate synthetase (279 aa).

An ATP-binding site is contributed by 26–33 (MGNLHEGH). H33 functions as the Proton donor in the catalytic mechanism. Residue Q57 coordinates (R)-pantoate. Q57 contacts beta-alanine. Residue 144-147 (GKKD) coordinates ATP. Q150 contributes to the (R)-pantoate binding site. Residues V173 and 181–184 (LSSR) contribute to the ATP site.

Belongs to the pantothenate synthetase family. In terms of assembly, homodimer.

The protein localises to the cytoplasm. The enzyme catalyses (R)-pantoate + beta-alanine + ATP = (R)-pantothenate + AMP + diphosphate + H(+). It participates in cofactor biosynthesis; (R)-pantothenate biosynthesis; (R)-pantothenate from (R)-pantoate and beta-alanine: step 1/1. Functionally, catalyzes the condensation of pantoate with beta-alanine in an ATP-dependent reaction via a pantoyl-adenylate intermediate. The protein is Pantothenate synthetase of Burkholderia ambifaria (strain MC40-6).